A 429-amino-acid chain; its full sequence is U3 small nucleolar RNA-associated protein 18 homolog (429 aa).

WD repeat units follow at residues 117-156, 295-336, 345-386, and 392-428; these read RYTR…KKDR, TDDG…NSTN, NLVT…TFKN, and GKVT…HFTD.

Belongs to the WD repeat UTP18 family.

It is found in the nucleus. It localises to the nucleolus. Functionally, involved in nucleolar processing of pre-18S ribosomal RNA. The protein is U3 small nucleolar RNA-associated protein 18 homolog of Caenorhabditis elegans.